The following is a 419-amino-acid chain: Creatine kinase S-type, mitochondrial (419 aa).

Residues 1-39 (MASAFSKLLTGRNASLLFTTLGTSALTTGYLLNRQKVSA) constitute a mitochondrion transit peptide. The tract at residues 40–64 (DAREQHKLFPPSADYPDLRKHNNCM) is cardiolipin-binding. Residues 46–132 (KLFPPSADYP…FDPVIKLRHN (87 aa)) form the Phosphagen kinase N-terminal domain. The Phosphagen kinase C-terminal domain maps to 159–401 (YVLSSRVRTG…NYLVDCEKKL (243 aa)). ATP is bound by residues 162 to 166 (SSRVR) and histidine 225. Tyrosine 255 carries the post-translational modification Phosphotyrosine. Residues arginine 270, arginine 326, 354-359 (RGTGGV), and aspartate 369 contribute to the ATP site. Phosphothreonine is present on threonine 356.

The protein belongs to the ATP:guanido phosphotransferase family. As to quaternary structure, exists as an octamer composed of four CKMT2 homodimers.

Its subcellular location is the mitochondrion inner membrane. It carries out the reaction creatine + ATP = N-phosphocreatine + ADP + H(+). Reversibly catalyzes the transfer of phosphate between ATP and various phosphogens (e.g. creatine phosphate). Creatine kinase isoenzymes play a central role in energy transduction in tissues with large, fluctuating energy demands, such as skeletal muscle, heart, brain and spermatozoa. This chain is Creatine kinase S-type, mitochondrial (Ckmt2), found in Mus musculus (Mouse).